The chain runs to 372 residues: Pluviatolide O-methyltransferase (372 aa).

S-adenosyl-L-homocysteine contacts are provided by Gly-214, Asp-237, Asp-257, Met-258, and Lys-271. His-275 functions as the Proton acceptor in the catalytic mechanism. Residues Asp-306 and Glu-338 contribute to the active site.

Belongs to the class I-like SAM-binding methyltransferase superfamily. Cation-independent O-methyltransferase family. COMT subfamily. Homodimer. In terms of tissue distribution, mostly expressed in stems, and, to a lower extent, in leaves.

It carries out the reaction (-)-pluviatolide + S-adenosyl-L-methionine = (-)-bursehernin + S-adenosyl-L-homocysteine + H(+). It functions in the pathway aromatic compound metabolism; phenylpropanoid biosynthesis. Its function is as follows. O-methyltransferase involved in the biosynthesis of etoposide, a chemotherapeutic compound of the topoisomerase inhibitor family. Catalyzes the methylation of (-)-pluviatolide to produce (-)-bursehernin. The chain is Pluviatolide O-methyltransferase from Sinopodophyllum hexandrum (Himalayan may apple).